Reading from the N-terminus, the 389-residue chain is Mitochondrial carrier homolog 1 (389 aa).

Residues 1 to 78 form a disordered region; that stretch reads MGASDPEVAP…PGAPGSGDNA (78 aa). Residues 1-93 lie on the Mitochondrial intermembrane side of the membrane; sequence MGASDPEVAP…LFVALGAGVT (93 aa). The span at 15-33 shows a compositional bias: gly residues; the sequence is GAAGMAGAGAGAGARGGAP. Arg29 is subject to Omega-N-methylarginine. 2 Solcar repeats span residues 81-176 and 192-280; these read TEAL…FPPD and KKVV…INAY. A helical transmembrane segment spans residues 94–104; it reads ALSHPLLYVKL. Topologically, residues 105–155 are cytoplasmic; the sequence is LIQVGHEPMPPTLGTNVLGRKVLYLPSFFTYAKYIVQVDGKIGLFRGLSPR. The chain crosses the membrane as a helical span at residues 156-176; the sequence is LMSNALSTVTRGSMKKVFPPD. Over 177-209 the chain is Mitochondrial intermembrane; the sequence is EMEQVSNKDDMKTSLKKVVKETSYEMMMQCVSR. The chain crosses the membrane as a helical span at residues 210–229; the sequence is MLAHPLHVISMRCMVQFVGR. Residues 230–254 are Cytoplasmic-facing; that stretch reads EAKYSGVLSSIGKIFKEEGLLGFFV. Residues 255-279 form a helical membrane-spanning segment; it reads GLIPHLLGDVVFLWGCNLLAHFINA. At 280 to 322 the chain is on the mitochondrial intermembrane side; it reads YLVDDSVSDTPGGLGNDQNPGSQFSQALAIRSYTKFVMGIAVS. A helical membrane pass occupies residues 323 to 342; that stretch reads MLTYPFLLVGDLMAVNNCGL. Residues 343 to 371 lie on the Cytoplasmic side of the membrane; sequence RAGLPPYSPVFKSWIHCWKYLSVQGQLFR. Residues 372-389 traverse the membrane as a helical segment; sequence GSSLLFRRVSSGSCFALE.

Belongs to the mitochondrial carrier (TC 2.A.29) family. As to quaternary structure, interacts with PSEN1.

The protein localises to the mitochondrion outer membrane. Protein insertase that mediates insertion of transmembrane proteins into the mitochondrial outer membrane. Catalyzes insertion of proteins with alpha-helical transmembrane regions, such as signal-anchored, tail-anchored and multi-pass membrane proteins. Does not mediate insertion of beta-barrel transmembrane proteins. May play a role in apoptosis. This is Mitochondrial carrier homolog 1 (Mtch1) from Mus musculus (Mouse).